Consider the following 445-residue polypeptide: uncharacterized protein (445 aa).

A Zn(2+)-binding site is contributed by His-66. Glu-69 functions as the Proton acceptor in the catalytic mechanism. Positions 70 and 146 each coordinate Zn(2+). The disordered stretch occupies residues 232–251; that stretch reads GRQSAPPRKSTGRINGGPAL.

The protein belongs to the peptidase M16 family. It depends on Zn(2+) as a cofactor.

This is an uncharacterized protein from Mycobacterium leprae (strain TN).